Consider the following 39-residue polypeptide: Cytochrome b559 subunit beta (39 aa).

Residues 14-30 (WLAVHGLAIPTVSFLGS) traverse the membrane as a helical segment. Position 18 (histidine 18) interacts with heme.

The protein belongs to the PsbE/PsbF family. In terms of assembly, heterodimer of an alpha subunit and a beta subunit. PSII is composed of 1 copy each of membrane proteins PsbA, PsbB, PsbC, PsbD, PsbE, PsbF, PsbH, PsbI, PsbJ, PsbK, PsbL, PsbM, PsbT, PsbX, PsbY, PsbZ, Psb30/Ycf12, at least 3 peripheral proteins of the oxygen-evolving complex and a large number of cofactors. It forms dimeric complexes. It depends on heme b as a cofactor.

The protein resides in the plastid. It is found in the chloroplast thylakoid membrane. In terms of biological role, this b-type cytochrome is tightly associated with the reaction center of photosystem II (PSII). PSII is a light-driven water:plastoquinone oxidoreductase that uses light energy to abstract electrons from H(2)O, generating O(2) and a proton gradient subsequently used for ATP formation. It consists of a core antenna complex that captures photons, and an electron transfer chain that converts photonic excitation into a charge separation. The chain is Cytochrome b559 subunit beta from Beta vulgaris (Sugar beet).